We begin with the raw amino-acid sequence, 437 residues long: Nicotinate phosphoribosyltransferase (437 aa).

Phosphohistidine; by autocatalysis is present on His-231.

Belongs to the NAPRTase family. In terms of processing, transiently phosphorylated on a His residue during the reaction cycle. Phosphorylation strongly increases the affinity for substrates and increases the rate of nicotinate D-ribonucleotide production. Dephosphorylation regenerates the low-affinity form of the enzyme, leading to product release.

The enzyme catalyses nicotinate + 5-phospho-alpha-D-ribose 1-diphosphate + ATP + H2O = nicotinate beta-D-ribonucleotide + ADP + phosphate + diphosphate. It participates in cofactor biosynthesis; NAD(+) biosynthesis; nicotinate D-ribonucleotide from nicotinate: step 1/1. Catalyzes the synthesis of beta-nicotinate D-ribonucleotide from nicotinate and 5-phospho-D-ribose 1-phosphate at the expense of ATP. The chain is Nicotinate phosphoribosyltransferase from Vibrio vulnificus (strain YJ016).